The following is a 228-amino-acid chain: Cytidylate kinase (228 aa).

ATP is bound at residue 10 to 18 (GPSGSGKGT).

Belongs to the cytidylate kinase family. Type 1 subfamily.

Its subcellular location is the cytoplasm. It carries out the reaction CMP + ATP = CDP + ADP. The catalysed reaction is dCMP + ATP = dCDP + ADP. This chain is Cytidylate kinase, found in Acinetobacter baumannii (strain ACICU).